The following is a 352-amino-acid chain: Protein RecA (352 aa).

Residue 68-75 (GPESSGKT) coordinates ATP.

Belongs to the RecA family.

Its subcellular location is the cytoplasm. Its function is as follows. Can catalyze the hydrolysis of ATP in the presence of single-stranded DNA, the ATP-dependent uptake of single-stranded DNA by duplex DNA, and the ATP-dependent hybridization of homologous single-stranded DNAs. It interacts with LexA causing its activation and leading to its autocatalytic cleavage. This chain is Protein RecA, found in Clostridium perfringens (strain ATCC 13124 / DSM 756 / JCM 1290 / NCIMB 6125 / NCTC 8237 / Type A).